A 382-amino-acid polypeptide reads, in one-letter code: Gap junction alpha-1 protein (382 aa).

Topologically, residues 2–23 are cytoplasmic; the sequence is GDWSALGKLLDKVQAYSTAGGK. Phosphoserine is present on Ser5. A helical membrane pass occupies residues 24 to 44; that stretch reads VWLSVLFIFRILLLGTAVESA. Topologically, residues 45–76 are extracellular; that stretch reads WGDEQSAFRCNTQQPGCENVCYDKSFPISHVR. Disulfide bonds link Cys54/Cys192 and Cys187/Cys198. A helical transmembrane segment spans residues 77-97; the sequence is FWVLQIIFVSVPTLLYLAHVF. Residues 98 to 155 are Cytoplasmic-facing; that stretch reads YVMRKEEKLNKKEEELKVAQTDGVNVEMHLKQIEIKKFKYGIEEHGKVKMRGGLLRTY. A Glycyl lysine isopeptide (Lys-Gly) (interchain with G-Cter in SUMO) cross-link involves residue Lys144. A helical transmembrane segment spans residues 156–176; the sequence is IISILFKSVFEVAFLLIQWYI. Over 177 to 207 the chain is Extracellular; the sequence is YGFSLSAVYTCKRDPCPHQVDCFLSRPTEKT. A helical membrane pass occupies residues 208–228; the sequence is IFIIFMLVVSLVSLALNIIEL. Residues 229-382 lie on the Cytoplasmic side of the membrane; it reads FYAFFKGVKD…SRPRPDDLEI (154 aa). Lys237 participates in a covalent cross-link: Glycyl lysine isopeptide (Lys-Gly) (interchain with G-Cter in SUMO). The tract at residues 244-382 is interaction with NOV; it reads SDPYHATTGP…SRPRPDDLEI (139 aa). Phosphotyrosine is present on Tyr247. Phosphoserine is present on residues Ser255, Ser257, and Ser262. The interval 264–382 is interaction with UBQLN4; sequence KYAYFNGCSS…SRPRPDDLEI (119 aa). Cys271 is modified (S-nitrosocysteine). Position 275 is a phosphothreonine (Thr275). Ser306 and Ser314 each carry phosphoserine. Residues 317 to 332 show a composition bias toward polar residues; it reads QNRMGQAGSTISNSHA. Positions 317-382 are disordered; sequence QNRMGQAGST…SRPRPDDLEI (66 aa). Ser325 is subject to Phosphoserine; by CK1. A Phosphothreonine modification is found at Thr326. A phosphoserine; by CK1 mark is found at Ser328 and Ser330. Residues 342–351 are compositionally biased toward basic and acidic residues; it reads QNSKKLDAGH. Phosphoserine is present on residues Ser344 and Ser365. Low complexity predominate over residues 362-374; the sequence is RPSSRASSRASSR. At Ser368 the chain carries Phosphoserine; by PKC/PRKCG and PKC/PRKCD. Ser369 and Ser373 each carry phosphoserine.

This sequence belongs to the connexin family. Alpha-type (group II) subfamily. In terms of assembly, a connexon is composed of a hexamer of connexins. Interacts with SGSM3. Interacts with RIC1/CIP150. Interacts with CNST and CSNK1D. Interacts (via C-terminus) with TJP1. Interacts (via C-terminus) with SRC (via SH3 domain). Interacts (not ubiquitinated) with UBQLN4 (via UBA domain). Interacts with NOV. Interacts with TMEM65. Interacts with ANK3/ANKG and PKP2. Phosphorylation at Ser-325, Ser-328 and Ser-330 by CK1 modulates gap junction assembly. Phosphorylated at Ser-368 by PRKCG; phosphorylation induces disassembly of gap junction plaques and inhibition of gap junction activity. Phosphorylation at Ser-368 by PRKCD triggers its internalization into small vesicles leading to proteasome-mediated degradation. In terms of processing, sumoylated with SUMO1, SUMO2 and SUMO3, which may regulate the level of functional Cx43 gap junctions at the plasma membrane. May be desumoylated by SENP1 or SENP2. Post-translationally, S-nitrosylation at Cys-271 is enriched at the muscle endothelial gap junction in arteries, it augments channel permeability and may regulate of smooth muscle cell to endothelial cell communication. Acetylated in the developing cortex; leading to delocalization from the cell membrane.

It localises to the cell membrane. It is found in the cell junction. The protein resides in the gap junction. The protein localises to the endoplasmic reticulum. In terms of biological role, gap junction protein that acts as a regulator of bladder capacity. A gap junction consists of a cluster of closely packed pairs of transmembrane channels, the connexons, through which materials of low MW diffuse from one cell to a neighboring cell. May play a critical role in the physiology of hearing by participating in the recycling of potassium to the cochlear endolymph. Negative regulator of bladder functional capacity: acts by enhancing intercellular electrical and chemical transmission, thus sensitizing bladder muscles to cholinergic neural stimuli and causing them to contract. May play a role in cell growth inhibition through the regulation of NOV expression and localization. Plays an essential role in gap junction communication in the ventricles. The chain is Gap junction alpha-1 protein (GJA1) from Sus scrofa (Pig).